Here is a 127-residue protein sequence, read N- to C-terminus: Small ribosomal subunit protein uS12 (127 aa).

Residue aspartate 89 is modified to 3-methylthioaspartic acid. The segment at 101–127 is disordered; it reads ALDTSGVAGRTQRRSKYGAKRPKEAKK. Residues 111 to 127 are compositionally biased toward basic residues; that stretch reads TQRRSKYGAKRPKEAKK.

It belongs to the universal ribosomal protein uS12 family. In terms of assembly, part of the 30S ribosomal subunit. Contacts proteins S8 and S17. May interact with IF1 in the 30S initiation complex.

Functionally, with S4 and S5 plays an important role in translational accuracy. Interacts with and stabilizes bases of the 16S rRNA that are involved in tRNA selection in the A site and with the mRNA backbone. Located at the interface of the 30S and 50S subunits, it traverses the body of the 30S subunit contacting proteins on the other side and probably holding the rRNA structure together. The combined cluster of proteins S8, S12 and S17 appears to hold together the shoulder and platform of the 30S subunit. The chain is Small ribosomal subunit protein uS12 from Flavobacterium johnsoniae (strain ATCC 17061 / DSM 2064 / JCM 8514 / BCRC 14874 / CCUG 350202 / NBRC 14942 / NCIMB 11054 / UW101) (Cytophaga johnsonae).